A 320-amino-acid polypeptide reads, in one-letter code: Malate dehydrogenase (320 aa).

NAD(+) is bound by residues 10–15 and Asp34; that span reads GSGMIG. Positions 83 and 89 each coordinate substrate. NAD(+)-binding positions include Asn96 and 119–121; that span reads ITN. Residues Asn121 and Arg152 each contribute to the substrate site. His176 acts as the Proton acceptor in catalysis.

This sequence belongs to the LDH/MDH superfamily. MDH type 3 family.

It carries out the reaction (S)-malate + NAD(+) = oxaloacetate + NADH + H(+). Catalyzes the reversible oxidation of malate to oxaloacetate. This chain is Malate dehydrogenase, found in Rhizobium johnstonii (strain DSM 114642 / LMG 32736 / 3841) (Rhizobium leguminosarum bv. viciae).